The chain runs to 388 residues: Succinate--CoA ligase [ADP-forming] subunit beta (388 aa).

The ATP-grasp domain maps to 9 to 244 (KQLFAEYGLP…PSQDDAREAH (236 aa)). Residues Lys46, 53–55 (GRG), Glu99, Thr102, and Glu107 each bind ATP. Residues Asn199 and Asp213 each contribute to the Mg(2+) site. Substrate contacts are provided by residues Asn264 and 321–323 (GIV).

The protein belongs to the succinate/malate CoA ligase beta subunit family. As to quaternary structure, heterotetramer of two alpha and two beta subunits. Mg(2+) serves as cofactor.

It catalyses the reaction succinate + ATP + CoA = succinyl-CoA + ADP + phosphate. The enzyme catalyses GTP + succinate + CoA = succinyl-CoA + GDP + phosphate. It participates in carbohydrate metabolism; tricarboxylic acid cycle; succinate from succinyl-CoA (ligase route): step 1/1. In terms of biological role, succinyl-CoA synthetase functions in the citric acid cycle (TCA), coupling the hydrolysis of succinyl-CoA to the synthesis of either ATP or GTP and thus represents the only step of substrate-level phosphorylation in the TCA. The beta subunit provides nucleotide specificity of the enzyme and binds the substrate succinate, while the binding sites for coenzyme A and phosphate are found in the alpha subunit. This chain is Succinate--CoA ligase [ADP-forming] subunit beta, found in Pseudomonas aeruginosa (strain UCBPP-PA14).